The sequence spans 139 residues: Probable disulfide formation protein C 1 (139 aa).

A helical membrane pass occupies residues 8–27 (EYALFTAWGASFIATLGSLY). A disulfide bridge connects residues C37 and C40. 2 consecutive transmembrane segments (helical) span residues 42–61 (YQRI…VVKK) and 68–85 (YSLP…YHYA). C99 and C104 are oxidised to a cystine. The helical transmembrane segment at 113–135 (GFVTIPFLALIGFITIAVCSFIV) threads the bilayer.

Belongs to the DsbB family. BdbC subfamily.

It is found in the cell membrane. Functionally, required for disulfide bond formation in some proteins. The chain is Probable disulfide formation protein C 1 (bdbC1) from Bacillus cereus (strain ATCC 10987 / NRS 248).